Reading from the N-terminus, the 490-residue chain is Histone-lysine N-methyltransferase, H3 lysine-9 specific (490 aa).

Residues 8 to 69 enclose the Chromo domain; it reads YEVERIVDEK…RKRRLKGSNS (62 aa). 2 disordered regions span residues 61 to 133 and 150 to 190; these read KRRL…TALT and KKLG…KPRN. The segment covering 102–114 has biased composition (basic and acidic residues); the sequence is FSRELNVKKENKK. Polar residues predominate over residues 115-133; it reads VFSSQTTKRQSRKQSTALT. Lys-127 is modified (N6,N6,N6-trimethyllysine; alternate). The residue at position 127 (Lys-127) is an N6-methyllysine; alternate. Residues 155-168 are compositionally biased toward basic and acidic residues; the sequence is TRNEVKEESQKREL. The span at 169 to 185 shows a compositional bias: polar residues; it reads VSNSIKEATSPKTSSIL. Residues 258-325 form the Pre-SET domain; it reads SGCNCSSLGG…ECPNRVVQRG (68 aa). Zn(2+) is bound by residues Cys-260, Cys-262, Cys-268, Cys-276, Cys-278, Cys-307, Cys-311, Cys-313, and Cys-317. Positions 328 to 452 constitute an SET domain; sequence LPLEIFKTKE…PLEELTFDYA (125 aa). S-adenosyl-L-methionine contacts are provided by residues 338–340, Tyr-381, Arg-406, and 407–410; these read KGW and FFNH. Cys-412 is a Zn(2+) binding site. The segment at 453–472 is autoregulatory loop; it reads GAKDFSPVQSQKSQQNRISK. N6,N6,N6-trimethyllysine; by autocatalysis; alternate is present on Lys-455. The residue at position 455 (Lys-455) is an N6,N6-dimethyllysine; by autocatalysis; alternate. Lys-455 carries the post-translational modification N6-methyllysine; by autocatalysis; alternate. Lys-464 bears the N6-methyllysine mark. Positions 473–489 constitute a Post-SET domain; that stretch reads LRRQCKCGSANCRGWLF. Zn(2+)-binding residues include Cys-477, Cys-479, and Cys-484. An S-adenosyl-L-methionine-binding site is contributed by 477 to 478; sequence CK.

This sequence belongs to the class V-like SAM-binding methyltransferase superfamily. Histone-lysine methyltransferase family. Suvar3-9 subfamily. Component of the Clr4 methyltransferase complex (ClrC) composed of at least clr4, rik1, pcu4, rbx1, raf1 and raf2. The cullin pcu4, rik1, raf1, raf2 and the ring-box protein rbx1 are components of an E3 ubiquitin ligase, whose activity is essential for heterochromatin assembly. Interacts directly with pcu4. Interacts with mlo3. In terms of processing, autocatalytic methylation of specific lysine residues in an internal loop (autoregulatory loop) promote a conformational switch that enhances the H3K9me activity of clr4.

The protein resides in the nucleus. It is found in the cytoplasm. The protein localises to the cytoskeleton. Its subcellular location is the microtubule organizing center. It localises to the spindle pole body. The protein resides in the chromosome. The enzyme catalyses L-lysyl(9)-[histone H3] + 3 S-adenosyl-L-methionine = N(6),N(6),N(6)-trimethyl-L-lysyl(9)-[histone H3] + 3 S-adenosyl-L-homocysteine + 3 H(+). The catalysed reaction is N(6)-methyl-L-lysyl(9)-[histone H3] + S-adenosyl-L-methionine = N(6),N(6)-dimethyl-L-lysyl(9)-[histone H3] + S-adenosyl-L-homocysteine + H(+). It catalyses the reaction N(6),N(6)-dimethyl-L-lysyl(9)-[histone H3] + S-adenosyl-L-methionine = N(6),N(6),N(6)-trimethyl-L-lysyl(9)-[histone H3] + S-adenosyl-L-homocysteine + H(+). It carries out the reaction L-lysyl-[protein] + S-adenosyl-L-methionine = N(6)-methyl-L-lysyl-[protein] + S-adenosyl-L-homocysteine + H(+). The enzyme catalyses N(6)-methyl-L-lysyl-[protein] + S-adenosyl-L-methionine = N(6),N(6)-dimethyl-L-lysyl-[protein] + S-adenosyl-L-homocysteine + H(+). The catalysed reaction is N(6),N(6)-dimethyl-L-lysyl-[protein] + S-adenosyl-L-methionine = N(6),N(6),N(6)-trimethyl-L-lysyl-[protein] + S-adenosyl-L-homocysteine + H(+). It catalyses the reaction L-lysyl(9)-[histone H3] + S-adenosyl-L-methionine = N(6)-methyl-L-lysyl(9)-[histone H3] + S-adenosyl-L-homocysteine + H(+). An internal loop (autoregulatory loop) inhibits the catalytic activity of the enzyme by blocking the histone H3K9 substrate-binding pocket. Autocatalytic methylation of specific lysine residues in this loop promote a conformational switch that enhances the H3K9me activity of clr4. In terms of biological role, histone methyltransferase which contributes to the establishment of heterochromatin by specifically methylating histone H3 to form H3K9me. Part of the Clr4 methyltransferase complex (ClrC). ClrC preferentially ubiquitylates H3K14 and ClrC-mediated H3 ubiquitination promotes clr4 methyltransferase activity. Clr4 functions as a reader and writer of H3K9 methylation. It sets the H3K9me mark and afterwards this H3K9me mark is recognized by the chromodomains of clr4 and swi6/HP1, which then recruit additional clr4 leading to the methylation of neighboring nucleosomes. H3K9me represents a specific tag for epigenetic transcriptional repression by recruiting swi6/HP1 to methylated histones which leads to transcriptional silencing within centromeric heterochromatin, telomeres, ribosomal DNA repeats, and the silent mating-type region. Clr4 methyltransferase activity promotes the assembly of a tripartite complex composed of ClrC and complexes involved in siRNA generation. Apart from H3K9, also methylates non-histone proteins such as mlo3. Interacts with mlo3 to promote the processing of centromeric and antisense RNAs. In Schizosaccharomyces pombe (strain 972 / ATCC 24843) (Fission yeast), this protein is Histone-lysine N-methyltransferase, H3 lysine-9 specific (clr4).